The primary structure comprises 103 residues: Large ribosomal subunit protein eL42 (103 aa).

Zn(2+) is bound by residues Cys18 and Cys21. The C4-type zinc finger occupies 18–81 (CPKCRTHTEH…TVLKLKCSKC (64 aa)). Residues 40-62 (LSEGERRYARKKKGYGSKRKPEQ) are disordered. Positions 47-57 (YARKKKGYGSK) are enriched in basic residues. Cys78 and Cys81 together coordinate Zn(2+).

The protein belongs to the eukaryotic ribosomal protein eL42 family. Part of the 50S ribosomal subunit. Zn(2+) serves as cofactor.

Binds to the 23S rRNA. This is Large ribosomal subunit protein eL42 from Desulfurococcus amylolyticus (strain DSM 18924 / JCM 16383 / VKM B-2413 / 1221n) (Desulfurococcus kamchatkensis).